The chain runs to 559 residues: DNA ligase (559 aa).

Glu-247 contributes to the ATP binding site. Lys-249 serves as the catalytic N6-AMP-lysine intermediate. Residues Arg-254, Arg-269, Glu-299, Phe-339, Arg-414, and Lys-420 each contribute to the ATP site.

Belongs to the ATP-dependent DNA ligase family. In terms of assembly, monomer. The cofactor is Mg(2+).

It catalyses the reaction ATP + (deoxyribonucleotide)n-3'-hydroxyl + 5'-phospho-(deoxyribonucleotide)m = (deoxyribonucleotide)n+m + AMP + diphosphate.. It carries out the reaction NAD(+) + (deoxyribonucleotide)n-3'-hydroxyl + 5'-phospho-(deoxyribonucleotide)m = (deoxyribonucleotide)n+m + AMP + beta-nicotinamide D-nucleotide.. Its function is as follows. DNA ligase that seals nicks in double-stranded DNA during DNA replication, DNA recombination and DNA repair. Can also use NAD, but less efficiently than ATP. The polypeptide is DNA ligase (Thermococcus kodakarensis (strain ATCC BAA-918 / JCM 12380 / KOD1) (Pyrococcus kodakaraensis (strain KOD1))).